Consider the following 301-residue polypeptide: Type II restriction enzyme BslI subunit beta (301 aa).

Residues 62–82 form a CHC2-type zinc finger; sequence CPDGHTKWNQNLTKEMTCSEC.

Heterotetramer of two alpha and two beta subunits. The alpha subunit is believed to be responsible for DNA recognition, while the beta subunit is thought to mediate cleavage. The cofactor is Zn(2+).

It catalyses the reaction Endonucleolytic cleavage of DNA to give specific double-stranded fragments with terminal 5'-phosphates.. In terms of biological role, a P subtype restriction enzyme that recognizes the double-stranded sequence 5'-CCN(7)GG-3' and cleaves after N-7. The protein is Type II restriction enzyme BslI subunit beta of Bacillus sp. (strain NEB-606).